The primary structure comprises 222 residues: Pleckstrin homology domain-containing family B member 2 (222 aa).

The PH domain occupies 2–109; the sequence is AFVKSGWLLR…WKFTLQDSRT (108 aa). A 1,2-diacyl-sn-glycero-3-phospho-L-serine is bound at residue Lys-20.

Its subcellular location is the recycling endosome membrane. Involved in retrograde transport of recycling endosomes. This chain is Pleckstrin homology domain-containing family B member 2 (PLEKHB2), found in Homo sapiens (Human).